A 355-amino-acid polypeptide reads, in one-letter code: Uroporphyrinogen decarboxylase (355 aa).

Substrate contacts are provided by residues 27–31 (RQAGR), aspartate 77, tyrosine 154, threonine 209, and histidine 327.

This sequence belongs to the uroporphyrinogen decarboxylase family. In terms of assembly, homodimer.

The protein localises to the cytoplasm. It catalyses the reaction uroporphyrinogen III + 4 H(+) = coproporphyrinogen III + 4 CO2. Its pathway is porphyrin-containing compound metabolism; protoporphyrin-IX biosynthesis; coproporphyrinogen-III from 5-aminolevulinate: step 4/4. Functionally, catalyzes the decarboxylation of four acetate groups of uroporphyrinogen-III to yield coproporphyrinogen-III. The protein is Uroporphyrinogen decarboxylase of Yersinia pseudotuberculosis serotype O:1b (strain IP 31758).